The sequence spans 316 residues: Cuticle collagen 13 (316 aa).

A signal peptide spans 1–36 (MSEDLKQIAQETESLRKVAFFGIAVSTIATLTAIIA). Low complexity-rich tracts occupy residues 127–157 (SGAA…PGQD) and 183–204 (APGQ…GAAL). Positions 127–316 (SGAAGPAGSP…CPPPRTAPGY (190 aa)) are disordered. 5 triple-helical region regions span residues 128 to 157 (GAAG…PGQD), 176 to 202 (GPPG…SGGA), 206 to 235 (GPPG…PGQV), 240 to 266 (GTPG…AGSS), and 269 to 304 (GGPG…EGAC). The segment covering 205–217 (PGPPGPAGPPGPA) has biased composition (pro residues). The span at 219-234 (QPGSNGNAGAPGAPGQ) shows a compositional bias: low complexity. A compositionally biased stretch (pro residues) spans 241–251 (TPGPAGPPGSP). 2 stretches are compositionally biased toward low complexity: residues 256–266 (APGQPGQAGSS) and 276–295 (DAGA…PGQD). The segment covering 307 to 316 (CPPPRTAPGY) has biased composition (pro residues).

This sequence belongs to the cuticular collagen family. As to quaternary structure, collagen polypeptide chains are complexed within the cuticle by disulfide bonds and other types of covalent cross-links.

Nematode cuticles are composed largely of collagen-like proteins. The cuticle functions both as an exoskeleton and as a barrier to protect the worm from its environment. This Caenorhabditis elegans protein is Cuticle collagen 13 (col-13).